Reading from the N-terminus, the 147-residue chain is Deoxyuridine 5'-triphosphate nucleotidohydrolase (147 aa).

Substrate-binding positions include 63-65 (RSG), N76, and 80-82 (TID).

It belongs to the dUTPase family. It depends on Mg(2+) as a cofactor.

The catalysed reaction is dUTP + H2O = dUMP + diphosphate + H(+). The protein operates within pyrimidine metabolism; dUMP biosynthesis; dUMP from dCTP (dUTP route): step 2/2. Its function is as follows. This enzyme is involved in nucleotide metabolism: it produces dUMP, the immediate precursor of thymidine nucleotides and it decreases the intracellular concentration of dUTP so that uracil cannot be incorporated into DNA. The sequence is that of Deoxyuridine 5'-triphosphate nucleotidohydrolase from Chlamydia abortus (strain DSM 27085 / S26/3) (Chlamydophila abortus).